Reading from the N-terminus, the 63-residue chain is MKLTCVLIVAVLILTACQVIAADEATNRATKRGCLMCWGSNVRCCEKANACVSINYECPKARR.

The signal sequence occupies residues 1 to 22; the sequence is MKLTCVLIVAVLILTACQVIAA. Intrachain disulfides connect cysteine 34–cysteine 45, cysteine 37–cysteine 51, and cysteine 44–cysteine 58.

This sequence belongs to the conotoxin O1 superfamily. In terms of tissue distribution, expressed by the venom duct.

The protein resides in the secreted. In terms of biological role, probable neurotoxin. This is Conotoxin Cal6.28 from Californiconus californicus (California cone).